The sequence spans 182 residues: Ribulose bisphosphate carboxylase small subunit, chloroplastic (182 aa).

A chloroplast-targeting transit peptide spans 1 to 58 (MASSMISSATVATVSRATPAQATMVAPFTGLKSTAAFPATRKSNNDITSLASNGGRVQ).

The protein belongs to the RuBisCO small chain family. In terms of assembly, heterohexadecamer of 8 large and 8 small subunits.

Its subcellular location is the plastid. It is found in the chloroplast. In terms of biological role, ruBisCO catalyzes two reactions: the carboxylation of D-ribulose 1,5-bisphosphate, the primary event in carbon dioxide fixation, as well as the oxidative fragmentation of the pentose substrate. Both reactions occur simultaneously and in competition at the same active site. Although the small subunit is not catalytic it is essential for maximal activity. The polypeptide is Ribulose bisphosphate carboxylase small subunit, chloroplastic (Fagus crenata (Japanese beech)).